The sequence spans 341 residues: Heat-inducible transcription repressor HrcA (341 aa).

The protein belongs to the HrcA family.

Functionally, negative regulator of class I heat shock genes (grpE-dnaK-dnaJ and groELS operons). Prevents heat-shock induction of these operons. The chain is Heat-inducible transcription repressor HrcA from Carboxydothermus hydrogenoformans (strain ATCC BAA-161 / DSM 6008 / Z-2901).